Here is a 251-residue protein sequence, read N- to C-terminus: Octanoyltransferase (251 aa).

In terms of domain architecture, BPL/LPL catalytic spans 56 to 237 (ADTGDEIWVV…RLIANLDGES (182 aa)). Substrate contacts are provided by residues 96–103 (RGGQITYH), 168–170 (ALG), and 181–183 (GLS). Cys199 (acyl-thioester intermediate) is an active-site residue.

This sequence belongs to the LipB family.

It is found in the cytoplasm. It catalyses the reaction octanoyl-[ACP] + L-lysyl-[protein] = N(6)-octanoyl-L-lysyl-[protein] + holo-[ACP] + H(+). Its pathway is protein modification; protein lipoylation via endogenous pathway; protein N(6)-(lipoyl)lysine from octanoyl-[acyl-carrier-protein]: step 1/2. Its function is as follows. Catalyzes the transfer of endogenously produced octanoic acid from octanoyl-acyl-carrier-protein onto the lipoyl domains of lipoate-dependent enzymes. Lipoyl-ACP can also act as a substrate although octanoyl-ACP is likely to be the physiological substrate. In Burkholderia ambifaria (strain ATCC BAA-244 / DSM 16087 / CCUG 44356 / LMG 19182 / AMMD) (Burkholderia cepacia (strain AMMD)), this protein is Octanoyltransferase.